Here is a 50-residue protein sequence, read N- to C-terminus: U37-theraphotoxin-Cg1b (50 aa).

An N-terminal signal peptide occupies residues 1-19 (MRVLLIIAGLALLSVVCYT).

It belongs to the neurotoxin 10 (Hwtx-1) family. 67 (Jztx-67) subfamily. As to expression, expressed by the venom gland.

Its subcellular location is the secreted. The polypeptide is U37-theraphotoxin-Cg1b (Chilobrachys guangxiensis (Chinese earth tiger tarantula)).